The chain runs to 931 residues: Myocardin-related transcription factor A (931 aa).

The interval 1–256 (MPPLKSPAAF…KQDRGAPPMD (256 aa)) is mediates interaction with SCAI and ACTB. Phosphoserine is present on Ser6. The intervening spacer sequence 1 stretch occupies residues 6–23 (SPAAFHEQRRSLERARTE). Residues 24 to 49 (DYLKRKIRSRPERSELVRMHILEETS) form an RPEL 1 repeat. The short motif at 27-65 (KRKIRSRPERSELVRMHILEETSAEPSLQAKQLKLKRAR) is the Bipartite Nuclear localization signal element. Residues 50-67 (AEPSLQAKQLKLKRARLA) form an intervening spacer sequence 2 region. The stretch at 68 to 93 (DDLNEKIAQRPGPMELVEKNILPVES) is one RPEL 2 repeat. Disordered stretches follow at residues 110-256 (ADSS…PPMD) and 290-344 (PAPP…GALP). Ser124, Ser139, and Ser156 each carry phosphoserine. Positions 151-162 (SATSASPTQVVS) are enriched in polar residues. Pro residues predominate over residues 180 to 189 (PPLPPPPLLP). Positions 191–215 (SLTNGTTIPTAKSTPTLIKQSQPKS) are enriched in polar residues. A compositionally biased stretch (basic and acidic residues) spans 216 to 231 (ASEKSQRSKKAKELKP). Position 305 is a phosphothreonine (Thr305). Residues Ser310 and Ser312 each carry the phosphoserine modification. The span at 310 to 320 (SLSTTNSSSSS) shows a compositional bias: low complexity. Residue Thr313 is modified to Phosphothreonine. Phosphoserine occurs at positions 317, 320, and 333. Residues 347-381 (LDDMKVAELKQELKLRSLPVSGTKTELIERLRAYQ) enclose the SAP domain. A phosphoserine mark is found at Ser385 and Ser446. Residues 444–476 (FGSTGSTPPVSPTPSERSLLSTGDENSTPGDTF) form a disordered region. At Thr447 the chain carries Phosphothreonine. Ser449 carries the post-translational modification Phosphoserine. A Phosphothreonine modification is found at Thr450. A Phosphoserine modification is found at Ser454. Thr456 is subject to Phosphothreonine. The residue at position 458 (Ser458) is a Phosphoserine. A compositionally biased stretch (polar residues) spans 459-473 (ERSLLSTGDENSTPG). Phosphoserine occurs at positions 482, 492, 507, and 511. Residues 515–563 (RAELEGRDKDQMLQEKDKQIEALTRMLRQKQQLVERLKLQLEQEKRAQQ) adopt a coiled-coil conformation. 3 disordered regions span residues 558–577 (EKRA…PVKQ), 674–746 (KNAD…SSSQ), and 763–816 (ADFK…RLED). Residues 678–694 (SPGLSSGSPQQPSSQPG) are compositionally biased toward low complexity. 3 positions are modified to phosphoserine: Ser685, Ser691, and Ser695. The span at 732 to 746 (MSQQPKQQENGSSSQ) shows a compositional bias: polar residues. Positions 763–778 (ADFKEPPSLPGKEKPS) are enriched in basic and acidic residues. The span at 784–799 (GSPLAAQPSPSAELPQ) shows a compositional bias: low complexity. Phosphoserine occurs at positions 792, 807, and 859.

In terms of assembly, interacts with SRF, forming the SRF-MRTFA nuclear complex which binds the 5'-CArG-3' consensus motif (CArG box) on DNA via SRF. Interacts (via RPEL repeats) with globular actin (G-actin), thereby regulating its subcellular location and activity of the complex formed with SRF. Either forms a trivalent (by binding three G-actin monomers) or pentavalent (by binding five G-actin monomers) complex with G-actin. Forms a nuclear ternary complex with SCAI and SRF, leading to suppress MRTFA-induced SRF transcriptional activity. Interacts with beta-actin (ACTB); interaction with ACTB prevents interaction with SCAI. Interacts with MRTFB. Phosphorylation at Ser-6 by Erk inhibits binding of globular actin (G-actin), unmasking the nuclear localization signal (NLS) and promoting nuclear import. As to expression, ubiquitously expressed, has been detected in lung, placenta, small intestine, liver, kidney, spleen, thymus, colon, muscle, heart and brain. Expressed in peripheral blood mononuclear cells (at protein level).

The protein localises to the cytoplasm. Its subcellular location is the nucleus. Its function is as follows. Transcription coactivator that associates with the serum response factor (SRF) transcription factor to control expression of genes regulating the cytoskeleton during development, morphogenesis and cell migration. The SRF-MRTFA complex activity responds to Rho GTPase-induced changes in cellular globular actin (G-actin) concentration, thereby coupling cytoskeletal gene expression to cytoskeletal dynamics. MRTFA binds G-actin via its RPEL repeats, regulating activity of the MRTFA-SRF complex. Activity is also regulated by filamentous actin (F-actin) in the nucleus. The chain is Myocardin-related transcription factor A from Homo sapiens (Human).